The following is a 129-amino-acid chain: M-zodatoxin-Lt8b (129 aa).

A signal peptide spans 1-20 (MKYFVVALALVAAFACIAES). The propeptide occupies 21–60 (KPAESEHELAEVEEENELADLEDAVWLEHLADLSDLEEAR). Residues 57–60 (EEAR) carry the Processing quadruplet motif motif.

Cleavage of the propeptide depends on the processing quadruplet motif (XXXR, with at least one of X being E). In terms of tissue distribution, expressed by the venom gland.

The protein localises to the secreted. In terms of biological role, insecticidal, cytolytic and antimicrobial peptide. Forms voltage-dependent, ion-permeable channels in membranes. At high concentration causes cell membrane lysis. This is M-zodatoxin-Lt8b (cit 1-2) from Lachesana tarabaevi (Spider).